Consider the following 289-residue polypeptide: Splicing factor C9orf78 homolog (289 aa).

Disordered regions lie at residues 1 to 30 and 85 to 111; these read MRITGKTFRRRRADSESEEDEQESEEVRLK and RGKDKVSEEEDLHLGTSFSAETNRRDE. Positions 5-58 are interaction with SNRNP200; the sequence is GKTFRRRRADSESEEDEQESEEVRLKLEETREVQNLRKRPNGVSAAALLVGEKV. A phosphoserine mark is found at Ser15 and Ser17. Phosphotyrosine is present on Tyr147. The segment covering 232-283 has biased composition (basic and acidic residues); that stretch reads LNAPIRRNKEEPKARPLRVGDTEKPEPERSPPNRKRPANEKATDDYHYEKFK. Residues 232 to 289 form a disordered region; that stretch reads LNAPIRRNKEEPKARPLRVGDTEKPEPERSPPNRKRPANEKATDDYHYEKFKKMNRRY. Thr253 carries the post-translational modification Phosphothreonine. Ser261 is modified (phosphoserine).

Belongs to the TLS1 family. Component of the spliceosome. Interacts with SNRNP200; the interaction is direct. Interacts with PRPF8.

It is found in the nucleus. Its subcellular location is the chromosome. The protein resides in the centromere. Plays a role in pre-mRNA splicing by promoting usage of the upstream 3'-splice site at alternative NAGNAG splice sites; these are sites featuring alternative acceptor motifs separated by only a few nucleotides. May also modulate exon inclusion events. PPlays a role in spliceosomal remodeling by displacing WBP4 from SNRNP200 and may act to inhibit SNRNP200 helicase activity. Binds U5 snRNA. Required for proper chromosome segregation. Not required for splicing of shelterin components. This chain is Splicing factor C9orf78 homolog, found in Mus musculus (Mouse).